A 148-amino-acid polypeptide reads, in one-letter code: MQLILLEKIANLGNLGDKVNVKAGYGRNYLLPFGKATAATAANLAAFEERRAELEKAAADRKASAESRAAQLAELEVTITATAGDEGKLFGSIGTHDIADALTASGVEVAKSEVRLPNGTIRNVGEFDVAVHLHAEVEATVRVVVVAA.

It belongs to the bacterial ribosomal protein bL9 family.

Functionally, binds to the 23S rRNA. This is Large ribosomal subunit protein bL9 from Pseudomonas fluorescens (strain Pf0-1).